Here is a 246-residue protein sequence, read N- to C-terminus: ATP synthase subunit a, chloroplastic (246 aa).

5 helical membrane-spanning segments follow: residues 33–53, 99–119, 133–153, 201–221, and 222–242; these read VHGQVLLVSWFVLAVIIGFGL, TIFLFVFVSNWSGALVPWALI, INTTVALALLTSIAYFYAGIN, GVLVALVPLVIPIPLMLLGLF, and TSAIQALVFSTLAGAYIGESL.

The protein belongs to the ATPase A chain family. F-type ATPases have 2 components, CF(1) - the catalytic core - and CF(0) - the membrane proton channel. CF(1) has five subunits: alpha(3), beta(3), gamma(1), delta(1), epsilon(1). CF(0) has four main subunits: a, b, b' and c.

The protein localises to the plastid. It localises to the chloroplast thylakoid membrane. Its function is as follows. Key component of the proton channel; it plays a direct role in the translocation of protons across the membrane. The polypeptide is ATP synthase subunit a, chloroplastic (Oltmannsiellopsis viridis (Marine flagellate)).